A 94-amino-acid polypeptide reads, in one-letter code: Pyrimidine/purine nucleoside phosphorylase (94 aa).

Belongs to the nucleoside phosphorylase PpnP family.

The catalysed reaction is a purine D-ribonucleoside + phosphate = a purine nucleobase + alpha-D-ribose 1-phosphate. It catalyses the reaction adenosine + phosphate = alpha-D-ribose 1-phosphate + adenine. It carries out the reaction cytidine + phosphate = cytosine + alpha-D-ribose 1-phosphate. The enzyme catalyses guanosine + phosphate = alpha-D-ribose 1-phosphate + guanine. The catalysed reaction is inosine + phosphate = alpha-D-ribose 1-phosphate + hypoxanthine. It catalyses the reaction thymidine + phosphate = 2-deoxy-alpha-D-ribose 1-phosphate + thymine. It carries out the reaction uridine + phosphate = alpha-D-ribose 1-phosphate + uracil. The enzyme catalyses xanthosine + phosphate = alpha-D-ribose 1-phosphate + xanthine. Functionally, catalyzes the phosphorolysis of diverse nucleosides, yielding D-ribose 1-phosphate and the respective free bases. Can use uridine, adenosine, guanosine, cytidine, thymidine, inosine and xanthosine as substrates. Also catalyzes the reverse reactions. The chain is Pyrimidine/purine nucleoside phosphorylase from Escherichia coli (strain ATCC 8739 / DSM 1576 / NBRC 3972 / NCIMB 8545 / WDCM 00012 / Crooks).